A 132-amino-acid polypeptide reads, in one-letter code: Small ribosomal subunit protein uS8 (132 aa).

This sequence belongs to the universal ribosomal protein uS8 family. Part of the 30S ribosomal subunit. Contacts proteins S5 and S12.

Functionally, one of the primary rRNA binding proteins, it binds directly to 16S rRNA central domain where it helps coordinate assembly of the platform of the 30S subunit. The polypeptide is Small ribosomal subunit protein uS8 (Acetivibrio thermocellus (strain ATCC 27405 / DSM 1237 / JCM 9322 / NBRC 103400 / NCIMB 10682 / NRRL B-4536 / VPI 7372) (Clostridium thermocellum)).